The primary structure comprises 261 residues: Ribosomal RNA small subunit methyltransferase J (261 aa).

Residues 109–110 (RD), 125–126 (ER), and Asp179 each bind S-adenosyl-L-methionine.

Belongs to the methyltransferase superfamily. RsmJ family.

It is found in the cytoplasm. It catalyses the reaction guanosine(1516) in 16S rRNA + S-adenosyl-L-methionine = N(2)-methylguanosine(1516) in 16S rRNA + S-adenosyl-L-homocysteine + H(+). In terms of biological role, specifically methylates the guanosine in position 1516 of 16S rRNA. This Pseudomonas paraeruginosa (strain DSM 24068 / PA7) (Pseudomonas aeruginosa (strain PA7)) protein is Ribosomal RNA small subunit methyltransferase J.